The following is a 559-amino-acid chain: Hepatocyte nuclear factor 1-beta (559 aa).

The segment at 1 to 31 (MVSKLTSLQQELLSALLSSGVTKEVLVQALE) is dimerization. The HNF-p1 domain occupies 1–32 (MVSKLTSLQQELLSALLSSGVTKEVLVQALEE). A phosphoserine mark is found at Ser-49, Ser-52, Ser-75, and Ser-80. The POU-specific atypical domain maps to 93-188 (KELQALNTEE…ILRQFNQTVQ (96 aa)). The segment at residues 231-312 (MRRNRFKWGP…RRKEEEAFRQ (82 aa)) is a DNA-binding region (homeobox; HNF1-type). Over residues 328-341 (NTLLSHSSPHHQPS) the composition is skewed to low complexity. A disordered region spans residues 328 to 371 (NTLLSHSSPHHQPSTSPPNKLPGVRYNQQGNNEVTSSSTISHHG). Residues 353–371 (YNQQGNNEVTSSSTISHHG) are compositionally biased toward polar residues.

Belongs to the HNF1 homeobox family. In terms of assembly, binds DNA as a dimer. Can form homodimer or heterodimer with HNF1-alpha. Interacts (via HNF-p1 domain) with PCBD1; the interaction increases its transactivation activity.

It is found in the nucleus. Its function is as follows. Transcription factor that binds to the inverted palindrome 5'-GTTAATNATTAAC-3'. Binds to the FPC element in the cAMP regulatory unit of the PLAU gene. Transcriptional activity is increased by coactivator PCBD1. The protein is Hepatocyte nuclear factor 1-beta (HNF1B) of Sus scrofa (Pig).